Consider the following 160-residue polypeptide: Cytochrome b6-f complex subunit 4 (160 aa).

Helical transmembrane passes span 36 to 56, 95 to 115, and 131 to 151; these read LLYIFPVVIVGTIALCVGLAV, LLGIVAMASIPLGLMLVPFIE, and AVFLFGTAVTLWLGIGATLPI.

The protein belongs to the cytochrome b family. PetD subfamily. As to quaternary structure, the 4 large subunits of the cytochrome b6-f complex are cytochrome b6, subunit IV (17 kDa polypeptide, PetD), cytochrome f and the Rieske protein, while the 4 small subunits are PetG, PetL, PetM and PetN. The complex functions as a dimer.

Its subcellular location is the cellular thylakoid membrane. Its function is as follows. Component of the cytochrome b6-f complex, which mediates electron transfer between photosystem II (PSII) and photosystem I (PSI), cyclic electron flow around PSI, and state transitions. This Trichodesmium erythraeum (strain IMS101) protein is Cytochrome b6-f complex subunit 4.